The following is a 486-amino-acid chain: Keratin-3, type I cytoskeletal 51 kDa (486 aa).

The interval 1 to 125 (MSNYSIKQSA…AGGMDIFSTN (125 aa)) is head. The interval 126–161 (EKQTMQNLNDRLASYLDKVHALETANTELERKIKEW) is coil 1A. An IF rod domain is found at 126-442 (EKQTMQNLND…RLLDGDLSKP (317 aa)). The linker 1 stretch occupies residues 162 to 184 (YEKQRPGSSSGDGAKDYSKYYTM). A coil 1B region spans residues 185–276 (INDLKNQIIA…KNHEDELKGM (92 aa)). The segment at 277–299 (QVTQVGQVNVEMNAAPSSDLTKI) is linker 12. The tract at residues 300–438 (LNDMRSQYED…ETYRRLLDGD (139 aa)) is coil 2. Residues 435-466 (LDGDLSKPKSGGGTSTNTGSTSSKGSTRTVKR) are disordered. Residues 439 to 486 (LSKPKSGGGTSTNTGSTSSKGSTRTVKRREIIEEVVDGKVVSTKVVDM) form a tail region. Low complexity predominate over residues 449–461 (STNTGSTSSKGST).

The protein belongs to the intermediate filament family. Heterotetramer of two type I and two type II keratins.

The chain is Keratin-3, type I cytoskeletal 51 kDa from Xenopus laevis (African clawed frog).